The primary structure comprises 213 residues: Large ribosomal subunit protein uL3 (213 aa).

Residues 122–147 (AIKRHGQSRGPMAHGSRYHRRPGSMG) are disordered.

It belongs to the universal ribosomal protein uL3 family. As to quaternary structure, part of the 50S ribosomal subunit. Forms a cluster with proteins L14 and L19.

In terms of biological role, one of the primary rRNA binding proteins, it binds directly near the 3'-end of the 23S rRNA, where it nucleates assembly of the 50S subunit. The polypeptide is Large ribosomal subunit protein uL3 (Geobacillus stearothermophilus (Bacillus stearothermophilus)).